The primary structure comprises 349 residues: Glycerol-3-phosphate dehydrogenase [NAD(+)], cytoplasmic (349 aa).

10–15 (GSGNWG) is a binding site for NAD(+). Lys120 contributes to the substrate binding site. Position 153 (Ala153) interacts with NAD(+). Catalysis depends on Lys204, which acts as the Proton acceptor. Residue Arg269 participates in NAD(+) binding. 269 to 270 (RN) provides a ligand contact to substrate. Lys289 is modified (N6-succinyllysine). 2 residues coordinate NAD(+): Lys296 and Gln298. At Tyr326 the chain carries Phosphotyrosine.

This sequence belongs to the NAD-dependent glycerol-3-phosphate dehydrogenase family. Homodimer.

It is found in the cytoplasm. The catalysed reaction is sn-glycerol 3-phosphate + NAD(+) = dihydroxyacetone phosphate + NADH + H(+). Functionally, has glycerol-3-phosphate dehydrogenase activity. The sequence is that of Glycerol-3-phosphate dehydrogenase [NAD(+)], cytoplasmic (GPD1) from Bos taurus (Bovine).